A 331-amino-acid chain; its full sequence is Ribosomal RNA small subunit methyltransferase H (331 aa).

S-adenosyl-L-methionine-binding positions include 38–40 (GGY), aspartate 56, phenylalanine 83, aspartate 100, and glutamine 107. The interval 287–331 (DEAELAENPRARSARLRVGVRTDAPAGKVDPQALGTPLIPKKGRR) is disordered.

This sequence belongs to the methyltransferase superfamily. RsmH family.

The protein resides in the cytoplasm. The catalysed reaction is cytidine(1402) in 16S rRNA + S-adenosyl-L-methionine = N(4)-methylcytidine(1402) in 16S rRNA + S-adenosyl-L-homocysteine + H(+). Functionally, specifically methylates the N4 position of cytidine in position 1402 (C1402) of 16S rRNA. The polypeptide is Ribosomal RNA small subunit methyltransferase H (Cereibacter sphaeroides (strain KD131 / KCTC 12085) (Rhodobacter sphaeroides)).